Consider the following 74-residue polypeptide: Defensin (74 aa).

Residues M1–A22 form the signal peptide. Positions A23 to R36 are excised as a propeptide. Cystine bridges form between C40-C61, C47-C69, and C51-C71.

As to expression, hemolymph.

The protein resides in the secreted. Functionally, antibacterial activity against Gram-positive and Gram-negative bacteria. In Dermacentor variabilis (American dog tick), this protein is Defensin (VSNA1).